The chain runs to 145 residues: D-aminoacyl-tRNA deacylase (145 aa).

The Gly-cisPro motif, important for rejection of L-amino acids signature appears at 137-138 (GP).

Belongs to the DTD family. As to quaternary structure, homodimer.

It is found in the cytoplasm. The catalysed reaction is glycyl-tRNA(Ala) + H2O = tRNA(Ala) + glycine + H(+). It catalyses the reaction a D-aminoacyl-tRNA + H2O = a tRNA + a D-alpha-amino acid + H(+). In terms of biological role, an aminoacyl-tRNA editing enzyme that deacylates mischarged D-aminoacyl-tRNAs. Also deacylates mischarged glycyl-tRNA(Ala), protecting cells against glycine mischarging by AlaRS. Acts via tRNA-based rather than protein-based catalysis; rejects L-amino acids rather than detecting D-amino acids in the active site. By recycling D-aminoacyl-tRNA to D-amino acids and free tRNA molecules, this enzyme counteracts the toxicity associated with the formation of D-aminoacyl-tRNA entities in vivo and helps enforce protein L-homochirality. This is D-aminoacyl-tRNA deacylase from Pseudomonas savastanoi pv. phaseolicola (strain 1448A / Race 6) (Pseudomonas syringae pv. phaseolicola (strain 1448A / Race 6)).